We begin with the raw amino-acid sequence, 49 residues long: uncharacterized protein (49 aa).

A helical membrane pass occupies residues 23 to 43; the sequence is LYVISFVLFIVLFFGMFFKLI.

The protein localises to the host membrane. This is an uncharacterized protein from Spiroplasma melliferum (SpV1).